The primary structure comprises 325 residues: Probable tRNA pseudouridine synthase B (325 aa).

Catalysis depends on Asp-71, which acts as the Nucleophile. The PUA domain occupies 238-313; sequence LPKIYVKDSA…VAASIERVIM (76 aa).

Belongs to the pseudouridine synthase TruB family. Type 2 subfamily.

It catalyses the reaction uridine(55) in tRNA = pseudouridine(55) in tRNA. Its function is as follows. Could be responsible for synthesis of pseudouridine from uracil-55 in the psi GC loop of transfer RNAs. This chain is Probable tRNA pseudouridine synthase B, found in Korarchaeum cryptofilum (strain OPF8).